The sequence spans 103 residues: Histone H4 (103 aa).

Residues 1–14 (MTGRGKGGKGLGKG) are compositionally biased toward gly residues. Residues 1-20 (MTGRGKGGKGLGKGGAKRHR) are disordered. N6-acetyl-N6-methyllysine; alternate is present on residues K6 and K13. Residues 17-21 (KRHRK) mediate DNA binding.

It belongs to the histone H4 family. As to quaternary structure, the nucleosome is a histone octamer containing two molecules each of H2A, H2B, H3 and H4 assembled in one H3-H4 heterotetramer and two H2A-H2B heterodimers. The octamer wraps approximately 147 bp of DNA.

The protein localises to the nucleus. Its subcellular location is the chromosome. Functionally, core component of nucleosome. Nucleosomes wrap and compact DNA into chromatin, limiting DNA accessibility to the cellular machineries which require DNA as a template. Histones thereby play a central role in transcription regulation, DNA repair, DNA replication and chromosomal stability. DNA accessibility is regulated via a complex set of post-translational modifications of histones, also called histone code, and nucleosome remodeling. This Diadromus pulchellus (Parasitic wasp) protein is Histone H4.